The chain runs to 186 residues: ATP-dependent protease subunit HslV (186 aa).

Residue threonine 14 is part of the active site. Positions 168, 171, and 174 each coordinate Na(+).

It belongs to the peptidase T1B family. HslV subfamily. In terms of assembly, a double ring-shaped homohexamer of HslV is capped on each side by a ring-shaped HslU homohexamer. The assembly of the HslU/HslV complex is dependent on binding of ATP.

It is found in the cytoplasm. The catalysed reaction is ATP-dependent cleavage of peptide bonds with broad specificity.. With respect to regulation, allosterically activated by HslU binding. Functionally, protease subunit of a proteasome-like degradation complex believed to be a general protein degrading machinery. The chain is ATP-dependent protease subunit HslV from Bradyrhizobium sp. (strain BTAi1 / ATCC BAA-1182).